The following is a 98-amino-acid chain: NADH-ubiquinone oxidoreductase chain 4L (98 aa).

Helical transmembrane passes span methionine 1–methionine 21, serine 29–leucine 49, and isoleucine 61–valine 81.

The protein belongs to the complex I subunit 4L family. As to quaternary structure, core subunit of respiratory chain NADH dehydrogenase (Complex I) which is composed of 45 different subunits.

It is found in the mitochondrion inner membrane. It carries out the reaction a ubiquinone + NADH + 5 H(+)(in) = a ubiquinol + NAD(+) + 4 H(+)(out). Its function is as follows. Core subunit of the mitochondrial membrane respiratory chain NADH dehydrogenase (Complex I) which catalyzes electron transfer from NADH through the respiratory chain, using ubiquinone as an electron acceptor. Part of the enzyme membrane arm which is embedded in the lipid bilayer and involved in proton translocation. In Bos indicus (Zebu), this protein is NADH-ubiquinone oxidoreductase chain 4L (MT-ND4L).